Consider the following 324-residue polypeptide: Phospho-N-acetylmuramoyl-pentapeptide-transferase (324 aa).

10 helical membrane passes run 5 to 25 (VILF…PIFI), 52 to 72 (PTMG…VMTM), 77 to 97 (VSMN…LGFL), 117 to 137 (LIGQ…QGMP), 147 to 167 (LSFD…VGGS), 176 to 196 (LDGL…ILAW), 203 to 223 (VAIF…FNAH), 227 to 247 (VFMG…IAIL), 250 to 270 (LEIL…SVIL), and 302 to 322 (VVVT…YIEV).

This sequence belongs to the glycosyltransferase 4 family. MraY subfamily. It depends on Mg(2+) as a cofactor.

The protein resides in the cell membrane. The catalysed reaction is UDP-N-acetyl-alpha-D-muramoyl-L-alanyl-gamma-D-glutamyl-meso-2,6-diaminopimeloyl-D-alanyl-D-alanine + di-trans,octa-cis-undecaprenyl phosphate = di-trans,octa-cis-undecaprenyl diphospho-N-acetyl-alpha-D-muramoyl-L-alanyl-D-glutamyl-meso-2,6-diaminopimeloyl-D-alanyl-D-alanine + UMP. Its pathway is cell wall biogenesis; peptidoglycan biosynthesis. Functionally, catalyzes the initial step of the lipid cycle reactions in the biosynthesis of the cell wall peptidoglycan: transfers peptidoglycan precursor phospho-MurNAc-pentapeptide from UDP-MurNAc-pentapeptide onto the lipid carrier undecaprenyl phosphate, yielding undecaprenyl-pyrophosphoryl-MurNAc-pentapeptide, known as lipid I. In Bacillus licheniformis (strain ATCC 14580 / DSM 13 / JCM 2505 / CCUG 7422 / NBRC 12200 / NCIMB 9375 / NCTC 10341 / NRRL NRS-1264 / Gibson 46), this protein is Phospho-N-acetylmuramoyl-pentapeptide-transferase.